Consider the following 277-residue polypeptide: N-acetylmuramic acid 6-phosphate etherase (277 aa).

The 164-residue stretch at 53-216 (IIPRVKKGGR…STTIMIELGR (164 aa)) folds into the SIS domain. The Proton donor role is filled by E81. The active site involves E112.

This sequence belongs to the GCKR-like family. MurNAc-6-P etherase subfamily. In terms of assembly, homodimer.

It catalyses the reaction N-acetyl-D-muramate 6-phosphate + H2O = N-acetyl-D-glucosamine 6-phosphate + (R)-lactate. It functions in the pathway amino-sugar metabolism; N-acetylmuramate degradation. Specifically catalyzes the cleavage of the D-lactyl ether substituent of MurNAc 6-phosphate, producing GlcNAc 6-phosphate and D-lactate. The polypeptide is N-acetylmuramic acid 6-phosphate etherase (Bacteroides thetaiotaomicron (strain ATCC 29148 / DSM 2079 / JCM 5827 / CCUG 10774 / NCTC 10582 / VPI-5482 / E50)).